Reading from the N-terminus, the 645-residue chain is Octopamine receptor Oamb (645 aa).

The Extracellular segment spans residues 1–25 (MNETECEDLIKSVKWTEPANLISLA). An N-linked (GlcNAc...) asparagine glycan is attached at Asn-2. The chain crosses the membrane as a helical span at residues 26-46 (VLEFINVLVIGGNCLVIAAVF). Topologically, residues 47-56 (CSNKLRSVTN) are cytoplasmic. A helical transmembrane segment spans residues 57–77 (FFIVNLAVADLLVGLAVLPFS). Topologically, residues 78-94 (ATWEVFKVWIFGDLWCR) are extracellular. Cys-93 and Cys-287 form a disulfide bridge. Residues 95-115 (IWLAVDVWMCTASILNLCAIS) form a helical membrane-spanning segment. At 116–138 (LDRYVAVTRPVTYPSIMSTKKAK) the chain is on the cytoplasmic side. The helical transmembrane segment at 139–159 (SLIAGIWVLSFFICFPPLVGW) threads the bilayer. The Extracellular portion of the chain corresponds to 160-295 (KDQKAVIQPT…KCELTNDRGY (136 aa)). Residue Asn-174 is glycosylated (N-linked (GlcNAc...) asparagine). A disordered region spans residues 190–212 (QLGLDSIKDQGEASLPPSPPHIG). The helical transmembrane segment at 296-316 (VLYSALGSFYIPMFVMLFFYW) threads the bilayer. Topologically, residues 317-520 (RIYRAAVRTT…FRMETKAAKT (204 aa)) are cytoplasmic. Disordered regions lie at residues 358–386 (GRGS…PSPE) and 479–500 (RQSN…KKMG). Residues 369–385 (SNGSTQSTTTTLGTPSP) are compositionally biased toward low complexity. The helical transmembrane segment at 521-541 (LAIIVGMFIFCWCPFFTMYII) threads the bilayer. Topologically, residues 542 to 551 (RPFCQDCVDP) are extracellular. A helical transmembrane segment spans residues 552-572 (LLFSVLFWLGYCNSAVNPMIY). The Cytoplasmic portion of the chain corresponds to 573 to 645 (ALFSKDFRFA…HHSEMSNDPR (73 aa)). The interval 621-645 (TPSAAAHSFGDESELHHSEMSNDPR) is disordered. Basic and acidic residues predominate over residues 629–645 (FGDESELHHSEMSNDPR).

Belongs to the G-protein coupled receptor 1 family. As to expression, highly enriched in mushroom body neuropil and in the ellipsoid body (at protein level). Expressed in oviduct epithelium (at protein level). Expressed in the adult and larval brain, thoracic and abdominal ganglia, terminal cells of the larval tracheal system, muscle, mature eggs and reproductive system.

The protein localises to the cell membrane. Its function is as follows. Receptor for octopamine (OA) which is a neurotransmitter, neurohormone and neuromodulator in invertebrates. Stimulates intracellular accumulation of cAMP and Ca(2+) following ligand binding. Required for ovulation. Following activation on mature follicle cells by OA, induces activity of the metalloprotease Mmp2 which leads to breakdown of the posterior follicle wall, resulting in ovulation. Ligand binding probably also leads to activation of CamKII which is also required for ovulation. Modulates sleep/wake behavior by acting in neurons of the pars intercerebralis to promote wakefulness. Plays a role in courtship conditioning where the courtship behavior of males rejected by already mated females is inhibited with further females. Required in the mushroom body for appetitive olfactory learning. Specifically conveys the short-term reinforcing effects of sweet taste. In insulin-producing cells of the brain, plays a role in inhibiting transcription of insulin-like peptide Ilp3. Also plays a role in social behavior by modulating male agression. This chain is Octopamine receptor Oamb, found in Drosophila melanogaster (Fruit fly).